The primary structure comprises 234 residues: Phosphoglycolate phosphatase (234 aa).

Residue Asp-13 is the Nucleophile of the active site. Mg(2+) contacts are provided by Asp-13, Asp-15, and Asp-175.

The protein belongs to the HAD-like hydrolase superfamily. CbbY/CbbZ/Gph/YieH family. As to quaternary structure, monomer. Mg(2+) serves as cofactor. Requires chloride as cofactor.

The enzyme catalyses 2-phosphoglycolate + H2O = glycolate + phosphate. It functions in the pathway organic acid metabolism; glycolate biosynthesis; glycolate from 2-phosphoglycolate: step 1/1. In terms of biological role, specifically catalyzes the dephosphorylation of 2-phosphoglycolate. Is involved in the dissimilation of the intracellular 2-phosphoglycolate formed during the DNA repair of 3'-phosphoglycolate ends, a major class of DNA lesions induced by oxidative stress. This is Phosphoglycolate phosphatase from Pectobacterium atrosepticum (strain SCRI 1043 / ATCC BAA-672) (Erwinia carotovora subsp. atroseptica).